The following is a 301-amino-acid chain: Ribosomal RNA small subunit methyltransferase A (301 aa).

Residues asparagine 23, isoleucine 25, glycine 50, glutamate 72, aspartate 97, and asparagine 149 each coordinate S-adenosyl-L-methionine.

It belongs to the class I-like SAM-binding methyltransferase superfamily. rRNA adenine N(6)-methyltransferase family. RsmA subfamily.

The protein resides in the cytoplasm. The catalysed reaction is adenosine(1518)/adenosine(1519) in 16S rRNA + 4 S-adenosyl-L-methionine = N(6)-dimethyladenosine(1518)/N(6)-dimethyladenosine(1519) in 16S rRNA + 4 S-adenosyl-L-homocysteine + 4 H(+). Its function is as follows. Specifically dimethylates two adjacent adenosines (A1518 and A1519) in the loop of a conserved hairpin near the 3'-end of 16S rRNA in the 30S particle. May play a critical role in biogenesis of 30S subunits. This Rickettsia peacockii (strain Rustic) protein is Ribosomal RNA small subunit methyltransferase A.